We begin with the raw amino-acid sequence, 1268 residues long: MSSVAVLTQESFAEHRSGLVPQQIIVATLNSEEESDPPTYKDAFPPLPEKAACLESAQEPAGAWSNKIRPIKASVITQVFHVPLEERKYKDMNQFGEGEQAKICLEIMQRTGAHLELSLAKDQGLSIMVSGKLDAVMKARKDIVARLQTQASATVPIPKEHHRFVIGKNGEKLQDLELKTATKIQIPRPDDPSNQIKITGTKEGIEKARHEVLLISAEQDKRAVKRLEVEKAFHPFIAGPYNRLVGEIMQETGTRINIPPPSVNRTEIVFTGEKEQLAQAVARIKKIYEEKKKKTTTIAVEVKKSQHKYVIGPKGNSLQEILERTGVSVEIPPSDSISETVILRGEPEKLGQALTEVYAKANSFTVSSVSAPSWLHRFIIGKKGQNLAKITHQMPKVHIEFTEGEDKITLEGPTEDVNVAQEQIEGMVKDLINRMDYVEINIDHKFHRHLIGKSGANINRIKDQYKVSVRIPPDSEKSNLIRIEGDPQGVQQAKRELLELASRMENERTKDLIIEQRFHRTIIGQKGERIREIRDKFPEVIINFPDPAQKSEIVQLRGPKNEVEKCTKYMQKMVADLVENSYSISVPIFKQFHKNIIGKGGANIKKIREESNTKIDLPAENSNSETIVITGKRANCEAARSRILSIQKDLANIAEVEVSIPAKLHNSLIGTKGRLIRSIMEECGGVHIHFPVEGSGSDTVVIRGPSSDVEKAKKQLLHLAEEKQTKSFTVDIRAKPEYHKFLIGKGGGKIRKVRDSTGARIIFPAAEDKDQDLITIIGKEDAVREAQKELEALIQNLDNVVEDYMLVDPRHHRHFVIRRGQVLREIAEEYGGVMVSFPRSGTQSDKVTLKGAKDCVEAAKKRIQEIIEDLEAQVTLECAIPQKFHRSVMGPKGSRIQQITRDYNVQIKFPDREENPVHSVEPSIQENGDEAGEGREAKETDPGSPRRCDIIVISGRKEKCEAAKEALEALVPVTIEVEVPFDLHRYIIGQKGSGIRKMMDEFEVNIHVPAPELQSHTIAITGLAANLDRAKAGLLDRVKELQAEQEDRALRSFKLSVTVDPKYHPKIIGGKGAVITQIRLEHDVNIQFPDKDDGNQPQDQITITGYEKNTEAARDAILKIVGELEQMVSEDVPLDHRVHARIIGARGKAIRKIMDEFKVDIRFPQSGAPDPNCVTVTGLPENVEEAIDHILNLEEEYLADVVDSEALQVYMKPPAHEESKAPSKGFVVRDAPWTSNSSEKAPDMSSSEEIPTFGAQVAPKTLPWGPKR.

N-acetylserine is present on S2. T8 is subject to Phosphothreonine. S11, S31, and S35 each carry phosphoserine. KH domains are found at residues 150–212 (QASA…RHEV), 222–284 (RAVK…VARI), 295–357 (TTTI…LTEV), 364–424 (FTVS…QEQI), 435–497 (MDYV…KREL), 507–570 (ERTK…TKYM), and 581–643 (SYSI…RSRI). Phosphothreonine occurs at positions 295 and 296. At S317 the chain carries Phosphoserine. Y437 is subject to Phosphotyrosine. S645 carries the phosphoserine modification. KH domains are found at residues 653-716 (IAEV…KKQL), 727-790 (SFTV…QKEL), 800-863 (VVED…KKRI), 873-967 (QVTL…KEAL), 972-1034 (PVTI…KAGL), 1052-1117 (SFKL…RDAI), and 1127-1190 (MVSE…IDHI). Positions 910–946 (PDREENPVHSVEPSIQENGDEAGEGREAKETDPGSPR) are disordered. A compositionally biased stretch (basic and acidic residues) spans 932–946 (GEGREAKETDPGSPR). The residue at position 991 (K991) is an N6-acetyllysine. The disordered stretch occupies residues 1214–1268 (PAHEESKAPSKGFVVRDAPWTSNSSEKAPDMSSSEEIPTFGAQVAPKTLPWGPKR). The segment covering 1233–1249 (WTSNSSEKAPDMSSSEE) has biased composition (polar residues). Position 1247 is a phosphoserine (S1247).

It is found in the cytoplasm. The protein localises to the nucleus. Functionally, appears to play a role in cell sterol metabolism. It may function to protect cells from over-accumulation of cholesterol. The sequence is that of Vigilin (Hdlbp) from Rattus norvegicus (Rat).